The sequence spans 188 residues: Putative pre-16S rRNA nuclease (188 aa).

Residues 144–188 are disordered; the sequence is HAPGRVVAGPKGRRKARHRGQGGTGTEQQADAGGRARPHATEGKG. Residues 154 to 163 are compositionally biased toward basic residues; sequence KGRRKARHRG.

It belongs to the YqgF nuclease family.

The protein localises to the cytoplasm. Its function is as follows. Could be a nuclease involved in processing of the 5'-end of pre-16S rRNA. The sequence is that of Putative pre-16S rRNA nuclease from Kineococcus radiotolerans (strain ATCC BAA-149 / DSM 14245 / SRS30216).